The following is a 400-amino-acid chain: Hyaluronidase (400 aa).

The N-terminal stretch at 1-19 (MQTILVLTTFLSAWFLAVG) is a signal peptide. 5 cysteine pairs are disulfide-bonded: cysteine 31/cysteine 319, cysteine 196/cysteine 209, cysteine 344/cysteine 355, cysteine 349/cysteine 384, and cysteine 386/cysteine 395. Residue glutamate 120 is the Proton donor of the active site. N-linked (GlcNAc...) asparagine glycosylation is found at asparagine 129 and asparagine 166. Residues asparagine 243 and asparagine 275 are each glycosylated (N-linked (GlcNAc...) asparagine). The region spanning 340 to 396 (NVARCSKQACSGRGRCTWPKDTSVIAWKFLVEKEDYDFYLGDIECKCVEGYEGRYCE) is the EGF-like domain.

The protein belongs to the glycosyl hydrolase 56 family. In terms of assembly, monomer. Expressed by the venom gland.

The protein resides in the secreted. The enzyme catalyses Random hydrolysis of (1-&gt;4)-linkages between N-acetyl-beta-D-glucosamine and D-glucuronate residues in hyaluronate.. Spider venom endo-hyaluronidase that is able to degrade purified hyaluronic acid (HA) and chondroitin sulfate (CS). Has no activity on dermatan sulfate (DS) and heparan sulfate (HS). Also increases the dermonecrotic effect of the dermonecrotic toxin (AC P0CE80), when injected in rabbit skin, supporting the hypothesis that venom hyaluronidases are spreading factors. The chain is Hyaluronidase from Loxosceles intermedia (Brown spider).